Reading from the N-terminus, the 579-residue chain is 2-isopropylmalate synthase (579 aa).

One can recognise a Pyruvate carboxyltransferase domain in the interval 40-314 (PRWCAVDLRD…DPMIDFSDID (275 aa)). D49, H253, H255, and N289 together coordinate Mg(2+). The interval 456-579 (SDEEQAQWGR…VNRAVRDAQA (124 aa)) is regulatory domain.

The protein belongs to the alpha-IPM synthase/homocitrate synthase family. LeuA type 2 subfamily. Homodimer. Mg(2+) serves as cofactor.

It is found in the cytoplasm. The catalysed reaction is 3-methyl-2-oxobutanoate + acetyl-CoA + H2O = (2S)-2-isopropylmalate + CoA + H(+). Its pathway is amino-acid biosynthesis; L-leucine biosynthesis; L-leucine from 3-methyl-2-oxobutanoate: step 1/4. Catalyzes the condensation of the acetyl group of acetyl-CoA with 3-methyl-2-oxobutanoate (2-ketoisovalerate) to form 3-carboxy-3-hydroxy-4-methylpentanoate (2-isopropylmalate). The protein is 2-isopropylmalate synthase of Paenarthrobacter aurescens (strain TC1).